We begin with the raw amino-acid sequence, 241 residues long: Large ribosomal subunit protein uL3 (241 aa).

Disordered stretches follow at residues 139 to 164 (VSHR…KMPG) and 215 to 241 (DAPK…QEGA). Glutamine 151 carries the N5-methylglutamine modification.

This sequence belongs to the universal ribosomal protein uL3 family. In terms of assembly, part of the 50S ribosomal subunit. Forms a cluster with proteins L14 and L19. Post-translationally, methylated by PrmB.

Functionally, one of the primary rRNA binding proteins, it binds directly near the 3'-end of the 23S rRNA, where it nucleates assembly of the 50S subunit. The polypeptide is Large ribosomal subunit protein uL3 (Rhodopseudomonas palustris (strain BisB5)).